Consider the following 247-residue polypeptide: tRNA pseudouridine synthase A (247 aa).

D52 acts as the Nucleophile in catalysis. Y113 lines the substrate pocket.

It belongs to the tRNA pseudouridine synthase TruA family. Homodimer.

It catalyses the reaction uridine(38/39/40) in tRNA = pseudouridine(38/39/40) in tRNA. Functionally, formation of pseudouridine at positions 38, 39 and 40 in the anticodon stem and loop of transfer RNAs. This is tRNA pseudouridine synthase A from Sinorhizobium fredii (strain NBRC 101917 / NGR234).